Here is a 245-residue protein sequence, read N- to C-terminus: Tetraspanin-6 (245 aa).

Topologically, residues 1 to 19 are cytoplasmic; that stretch reads MASPSRRLQTKPVITCLKS. The helical transmembrane segment at 20 to 40 threads the bilayer; it reads VLLIYTFIFWITGVILLAVGI. Residues 41–59 are Extracellular-facing; it reads WGKVSLENYFSLLNEKATN. The helical transmembrane segment at 60-80 threads the bilayer; it reads VPFVLIGTGTVIILLGTFGCF. Topologically, residues 81–93 are cytoplasmic; sequence ATCRTSAWMLKLY. The chain crosses the membrane as a helical span at residues 94–114; that stretch reads AMFLTLIFLVELVAAIVGFVF. Residues 115-208 are Extracellular-facing; sequence RHEIKNSFKS…IKVMTTIESE (94 aa). Residue Asn134 is glycosylated (N-linked (GlcNAc...) asparagine). Residues 209 to 229 traverse the membrane as a helical segment; that stretch reads MGVVAGISFGVACFQLIGIFL. Residues 230-245 lie on the Cytoplasmic side of the membrane; the sequence is AYCLSRAITNNQYEIV.

It belongs to the tetraspanin (TM4SF) family.

The protein localises to the membrane. The sequence is that of Tetraspanin-6 (Tspan6) from Mus musculus (Mouse).